Here is a 346-residue protein sequence, read N- to C-terminus: GTPase Obg (346 aa).

The Obg domain occupies 1-159 (MRFVDEVTFV…RELRLELQLL (159 aa)). The disordered stretch occupies residues 128 to 148 (LHFKSSTNRAPRQSTEGTAGE). Positions 130-144 (FKSSTNRAPRQSTEG) are enriched in polar residues. An OBG-type G domain is found at 160-335 (ADVGLLGMPN…LCGDIMNDLE (176 aa)). GTP is bound by residues 166–173 (GMPNVGKS), 191–195 (FTTLY), 213–216 (DIPG), 285–288 (NRLD), and 316–318 (SGL). Positions 173 and 193 each coordinate Mg(2+).

It belongs to the TRAFAC class OBG-HflX-like GTPase superfamily. OBG GTPase family. As to quaternary structure, monomer. Mg(2+) is required as a cofactor.

It localises to the cytoplasm. Its function is as follows. An essential GTPase which binds GTP, GDP and possibly (p)ppGpp with moderate affinity, with high nucleotide exchange rates and a fairly low GTP hydrolysis rate. Plays a role in control of the cell cycle, stress response, ribosome biogenesis and in those bacteria that undergo differentiation, in morphogenesis control. This is GTPase Obg from Halorhodospira halophila (strain DSM 244 / SL1) (Ectothiorhodospira halophila (strain DSM 244 / SL1)).